The chain runs to 327 residues: Vacuolar protein sorting-associated protein 26A (327 aa).

Residues 306–327 (RTNFHQRFESPESQASAEQPEM) are disordered. Ser315 carries the phosphoserine modification. Residues 316–327 (PESQASAEQPEM) are compositionally biased toward polar residues.

The protein belongs to the VPS26 family. In terms of assembly, component of the heterotrimeric retromer cargo-selective complex (CSC), also described as vacuolar protein sorting subcomplex (VPS), formed by VPS26 (VPS26A or VPS26B), VPS29 and VPS35. The CSC has a highly elongated structure with VPS26 and VPS29 binding independently at opposite distal ends of VPS35 as central platform. The CSC is believed to associate with variable sorting nexins to form functionally distinct retromer complex variants. The originally described retromer complex (also called SNX-BAR retromer) is a pentamer containing the CSC and a heterodimeric membrane-deforming subcomplex formed between SNX1 or SNX2 and SNX5 or SNX6 (also called SNX-BAR subcomplex); the respective CSC and SNX-BAR subcomplexes associate with low affinity. The CSC associates with SNX3 to form a SNX3-retromer complex. The CSC associates with SNX27, the WASH complex and the SNX-BAR subcomplex to form the SNX27-retromer complex. Interacts with VPS29, VPS35, SNX27, SNX1, SNX2, SNX5, SNX6, SNX3, RAB7A, ECPAS, EHD1, WASHC5, SORL1.

The protein resides in the cytoplasm. Its subcellular location is the endosome membrane. It is found in the early endosome. In terms of biological role, acts as a component of the retromer cargo-selective complex (CSC). The CSC is believed to be the core functional component of retromer or respective retromer complex variants acting to prevent missorting of selected transmembrane cargo proteins into the lysosomal degradation pathway. The recruitment of the CSC to the endosomal membrane involves RAB7A and SNX3. The SNX-BAR retromer mediates retrograde transport of cargo proteins from endosomes to the trans-Golgi network (TGN) and is involved in endosome-to-plasma membrane transport for cargo protein recycling. The SNX3-retromer mediates the retrograde endosome-to-TGN transport of WLS distinct from the SNX-BAR retromer pathway. The SNX27-retromer is believed to be involved in endosome-to-plasma membrane trafficking and recycling of a broad spectrum of cargo proteins. The CSC complex seems to act as recruitment hub for other proteins, such as the WASH complex and TBC1D5. Required for retrograde transport of lysosomal enzyme receptor IGF2R. Required to regulate transcytosis of the polymeric immunoglobulin receptor (pIgR-pIgA). Required for the endosomal localization of WASHC2 (indicative for the WASH complex). Required for the endosomal localization of TBC1D5. Mediates retromer cargo recognition of SORL1 and is involved in trafficking of SORL1 implicated in sorting and processing of APP. Involved in retromer-independent lysosomal sorting of F2R. Involved in recycling of ADRB2. Acts redundantly with VSP26B in SNX-27 mediated endocytic recycling of SLC2A1/GLUT1. Enhances the affinity of SNX27 for PDZ-binding motifs in cargo proteins. The polypeptide is Vacuolar protein sorting-associated protein 26A (Vps26a) (Rattus norvegicus (Rat)).